We begin with the raw amino-acid sequence, 209 residues long: ATP-dependent Clp protease proteolytic subunit (209 aa).

Ser106 functions as the Nucleophile in the catalytic mechanism. Residue His131 is part of the active site.

The protein belongs to the peptidase S14 family. In terms of assembly, fourteen ClpP subunits assemble into 2 heptameric rings which stack back to back to give a disk-like structure with a central cavity, resembling the structure of eukaryotic proteasomes.

It is found in the cytoplasm. It catalyses the reaction Hydrolysis of proteins to small peptides in the presence of ATP and magnesium. alpha-casein is the usual test substrate. In the absence of ATP, only oligopeptides shorter than five residues are hydrolyzed (such as succinyl-Leu-Tyr-|-NHMec, and Leu-Tyr-Leu-|-Tyr-Trp, in which cleavage of the -Tyr-|-Leu- and -Tyr-|-Trp bonds also occurs).. Its function is as follows. Cleaves peptides in various proteins in a process that requires ATP hydrolysis. Has a chymotrypsin-like activity. Plays a major role in the degradation of misfolded proteins. This chain is ATP-dependent Clp protease proteolytic subunit, found in Caulobacter vibrioides (strain ATCC 19089 / CIP 103742 / CB 15) (Caulobacter crescentus).